We begin with the raw amino-acid sequence, 333 residues long: tRNA N6-adenosine threonylcarbamoyltransferase (333 aa).

Fe cation is bound by residues histidine 111 and histidine 115. Substrate-binding positions include 134–138, aspartate 167, glycine 180, and asparagine 272; that span reads LVSGG. Aspartate 300 contacts Fe cation.

Belongs to the KAE1 / TsaD family. Requires Fe(2+) as cofactor.

The protein resides in the cytoplasm. It carries out the reaction L-threonylcarbamoyladenylate + adenosine(37) in tRNA = N(6)-L-threonylcarbamoyladenosine(37) in tRNA + AMP + H(+). Required for the formation of a threonylcarbamoyl group on adenosine at position 37 (t(6)A37) in tRNAs that read codons beginning with adenine. Is involved in the transfer of the threonylcarbamoyl moiety of threonylcarbamoyl-AMP (TC-AMP) to the N6 group of A37, together with TsaE and TsaB. TsaD likely plays a direct catalytic role in this reaction. The sequence is that of tRNA N6-adenosine threonylcarbamoyltransferase from Legionella pneumophila (strain Lens).